A 296-amino-acid chain; its full sequence is Cytidine deaminase (296 aa).

2 consecutive CMP/dCMP-type deaminase domains span residues 47–167 (TEAE…FGPK) and 186–296 (DSSD…VDPV). 88–90 (NLE) lines the substrate pocket. Histidine 101 provides a ligand contact to Zn(2+). Residue glutamate 103 is the Proton donor of the active site. Zn(2+) contacts are provided by cysteine 128 and cysteine 131.

This sequence belongs to the cytidine and deoxycytidylate deaminase family. Homodimer. Zn(2+) is required as a cofactor.

The catalysed reaction is cytidine + H2O + H(+) = uridine + NH4(+). It carries out the reaction 2'-deoxycytidine + H2O + H(+) = 2'-deoxyuridine + NH4(+). Functionally, this enzyme scavenges exogenous and endogenous cytidine and 2'-deoxycytidine for UMP synthesis. The polypeptide is Cytidine deaminase (Shewanella sp. (strain ANA-3)).